The sequence spans 86 residues: Exodeoxyribonuclease 7 small subunit (86 aa).

It belongs to the XseB family. In terms of assembly, heterooligomer composed of large and small subunits.

Its subcellular location is the cytoplasm. It catalyses the reaction Exonucleolytic cleavage in either 5'- to 3'- or 3'- to 5'-direction to yield nucleoside 5'-phosphates.. Its function is as follows. Bidirectionally degrades single-stranded DNA into large acid-insoluble oligonucleotides, which are then degraded further into small acid-soluble oligonucleotides. This chain is Exodeoxyribonuclease 7 small subunit, found in Agrobacterium fabrum (strain C58 / ATCC 33970) (Agrobacterium tumefaciens (strain C58)).